A 445-amino-acid chain; its full sequence is Guanosine nucleotide diphosphate dissociation inhibitor At5g09550 (445 aa).

Belongs to the Rab GDI family.

In terms of biological role, regulates the GDP/GTP exchange reaction of most RAB proteins by inhibiting the dissociation of GDP from them, and the subsequent binding of GTP. The chain is Guanosine nucleotide diphosphate dissociation inhibitor At5g09550 from Arabidopsis thaliana (Mouse-ear cress).